We begin with the raw amino-acid sequence, 431 residues long: Adenylosuccinate synthetase (431 aa).

GTP-binding positions include 13–19 (GDEGKGK) and 41–43 (GHT). Aspartate 14 (proton acceptor) is an active-site residue. Mg(2+) contacts are provided by aspartate 14 and glycine 41. Residues 14–17 (DEGK), 39–42 (NAGH), threonine 130, arginine 144, glutamine 225, threonine 240, and arginine 304 contribute to the IMP site. Histidine 42 (proton donor) is an active-site residue. 300 to 306 (AVTGRPR) provides a ligand contact to substrate. Residues arginine 306, 332-334 (KLD), and 415-417 (STG) contribute to the GTP site.

The protein belongs to the adenylosuccinate synthetase family. Homodimer. Requires Mg(2+) as cofactor.

Its subcellular location is the cytoplasm. The catalysed reaction is IMP + L-aspartate + GTP = N(6)-(1,2-dicarboxyethyl)-AMP + GDP + phosphate + 2 H(+). Its pathway is purine metabolism; AMP biosynthesis via de novo pathway; AMP from IMP: step 1/2. Plays an important role in the de novo pathway of purine nucleotide biosynthesis. Catalyzes the first committed step in the biosynthesis of AMP from IMP. In Legionella pneumophila subsp. pneumophila (strain Philadelphia 1 / ATCC 33152 / DSM 7513), this protein is Adenylosuccinate synthetase.